We begin with the raw amino-acid sequence, 265 residues long: MEMLLPMCLLLVSLCLGQCQALGSFVHCEPCDDKAMSMCPPTPVGCELVKEPGCGCCMTCALAEGHRCGVYTEHCAKGLRCLPEQGEEKPLHALLHGRGVCLNLKNHRDQSKIDRESREEDPTTSETEDIYQSKHRGKMRLSDQKAIALNTFRQKKHSQSRIVSVEKVQSPSTPEHSIEIDMGPCRRQVETLMQEMKLSHRVYPRAFYLPNCDRKGFYKRKQCKPSRGRKRGLCWCVDKYGLKLPGIDYVNGDLQCHSFDSSNTE.

The first 21 residues, 1-21 (MEMLLPMCLLLVSLCLGQCQA), serve as a signal peptide directing secretion. The region spanning 24 to 104 (SFVHCEPCDD…LHGRGVCLNL (81 aa)) is the IGFBP N-terminal domain. Cystine bridges form between C28/C54, C31/C56, C39/C57, C46/C60, C68/C81, and C75/C101. Residues 111-121 (SKIDRESREED) are compositionally biased toward basic and acidic residues. The tract at residues 111 to 137 (SKIDRESREEDPTTSETEDIYQSKHRG) is disordered. The region spanning 182–256 (MGPCRRQVET…IDYVNGDLQC (75 aa)) is the Thyroglobulin type-1 domain. Disulfide bonds link C185/C212, C223/C234, and C236/C256.

The protein resides in the secreted. IGF-binding proteins prolong the half-life of the IGFs and have been shown to either inhibit or stimulate the growth promoting effects of the IGFs on cell culture. They alter the interaction of IGFs with their cell surface receptors. Promotes anterior neural development by stimulating insulin growth factor (IGF) signaling via IGF receptors. The chain is Insulin-like growth factor-binding protein 5 from Xenopus laevis (African clawed frog).